Reading from the N-terminus, the 65-residue chain is Large ribosomal subunit protein uL29 (65 aa).

It belongs to the universal ribosomal protein uL29 family.

The chain is Large ribosomal subunit protein uL29 from Xylella fastidiosa (strain Temecula1 / ATCC 700964).